We begin with the raw amino-acid sequence, 314 residues long: Fibrinogen-like protein 1 (314 aa).

Positions 1–22 (MGEIRSFVLITVALILGKESWV) are cleaved as a signal peptide. The stretch at 28–62 (CLQEQVRLRAQVRQLETRVKQQQVVIAQLLHEKEV) forms a coiled coil. The Fibrinogen C-terminal domain maps to 76–308 (LGGKRHYADC…SVVMKIRPSD (233 aa)). 2 disulfides stabilise this stretch: Cys-85–Cys-114 and Cys-250–Cys-263.

In terms of assembly, homodimer. Interacts (via the Fibrinogen C-terminal domain) with LAG3 (via Ig-like domains 1 and 2).

Its subcellular location is the secreted. Immune suppressive molecule that inhibits antigen-specific T-cell activation by acting as a major ligand of LAG3. Responsible for LAG3 T-cell inhibitory function. Binds LAG3 independently from MHC class II (MHC-II). Secreted by, and promotes growth of, hepatocytes. This is Fibrinogen-like protein 1 from Rattus norvegicus (Rat).